Reading from the N-terminus, the 272-residue chain is GATA zinc finger domain-containing protein 1 (272 aa).

The segment at 9–33 (CSVCKTTSSSMWKKGPQGEILCHHC) adopts a GATA-type zinc-finger fold. Residues 67 to 120 (TFASTSAAPPQSNGGGGGKQSKQEIHRRSARLRNTKYKSAPAAEKKVSTKGKGR) form a disordered region. Position 167 is an N6-acetyllysine (lysine 167). Residue lysine 265 forms a Glycyl lysine isopeptide (Lys-Gly) (interchain with G-Cter in SUMO2) linkage.

The protein localises to the nucleus. The protein is GATA zinc finger domain-containing protein 1 (GATAD1) of Bos taurus (Bovine).